Here is an 87-residue protein sequence, read N- to C-terminus: Small ribosomal subunit protein bS18 (87 aa).

The interval 1 to 21 (MRHKPTPPKGNKSLGNALASK) is disordered.

This sequence belongs to the bacterial ribosomal protein bS18 family. In terms of assembly, part of the 30S ribosomal subunit. Forms a tight heterodimer with protein bS6.

Functionally, binds as a heterodimer with protein bS6 to the central domain of the 16S rRNA, where it helps stabilize the platform of the 30S subunit. The protein is Small ribosomal subunit protein bS18 of Chlorobium phaeobacteroides (strain DSM 266 / SMG 266 / 2430).